A 373-amino-acid chain; its full sequence is Transaldolase (373 aa).

Lys-143 serves as the catalytic Schiff-base intermediate with substrate.

It belongs to the transaldolase family. Type 2 subfamily.

Its subcellular location is the cytoplasm. It catalyses the reaction D-sedoheptulose 7-phosphate + D-glyceraldehyde 3-phosphate = D-erythrose 4-phosphate + beta-D-fructose 6-phosphate. It functions in the pathway carbohydrate degradation; pentose phosphate pathway; D-glyceraldehyde 3-phosphate and beta-D-fructose 6-phosphate from D-ribose 5-phosphate and D-xylulose 5-phosphate (non-oxidative stage): step 2/3. Functionally, transaldolase is important for the balance of metabolites in the pentose-phosphate pathway. The chain is Transaldolase (tal) from Mycobacterium tuberculosis (strain ATCC 25618 / H37Rv).